Here is a 776-residue protein sequence, read N- to C-terminus: DNA topoisomerase 1 (776 aa).

One can recognise a Toprim domain in the interval 1-111 (MKLVIVESPA…VESDDFFKRV (111 aa)). Residues E7 and D80 each coordinate Mg(2+). In terms of domain architecture, Topo IA-type catalytic spans 132-568 (DTNLVNAQQA…FWRGFNHNIE (437 aa)). An interaction with DNA region spans residues 166–171 (SAGRVQ). Y304 functions as the O-(5'-phospho-DNA)-tyrosine intermediate in the catalytic mechanism. The C4-type zinc-finger motif lies at 600–627 (CPSCKTGQLSLKLGKFGAFLACSNYPEC).

The protein belongs to the type IA topoisomerase family. In terms of assembly, monomer. Mg(2+) is required as a cofactor.

It carries out the reaction ATP-independent breakage of single-stranded DNA, followed by passage and rejoining.. Its function is as follows. Releases the supercoiling and torsional tension of DNA, which is introduced during the DNA replication and transcription, by transiently cleaving and rejoining one strand of the DNA duplex. Introduces a single-strand break via transesterification at a target site in duplex DNA. The scissile phosphodiester is attacked by the catalytic tyrosine of the enzyme, resulting in the formation of a DNA-(5'-phosphotyrosyl)-enzyme intermediate and the expulsion of a 3'-OH DNA strand. The free DNA strand then undergoes passage around the unbroken strand, thus removing DNA supercoils. Finally, in the religation step, the DNA 3'-OH attacks the covalent intermediate to expel the active-site tyrosine and restore the DNA phosphodiester backbone. In Rickettsia prowazekii (strain Madrid E), this protein is DNA topoisomerase 1.